Consider the following 212-residue polypeptide: Ribonuclease HII (212 aa).

The RNase H type-2 domain maps to 2-206 (TPLVGVDEAG…CERIRAEAEQ (205 aa)). A divalent metal cation-binding residues include D8, E9, and D101.

It belongs to the RNase HII family. The cofactor is Mn(2+). Mg(2+) serves as cofactor.

The protein localises to the cytoplasm. It catalyses the reaction Endonucleolytic cleavage to 5'-phosphomonoester.. Endonuclease that specifically degrades the RNA of RNA-DNA hybrids. This is Ribonuclease HII from Natronomonas pharaonis (strain ATCC 35678 / DSM 2160 / CIP 103997 / JCM 8858 / NBRC 14720 / NCIMB 2260 / Gabara) (Halobacterium pharaonis).